We begin with the raw amino-acid sequence, 375 residues long: Probable UDP-N-acetylglucosamine 2-epimerase (375 aa).

It belongs to the UDP-N-acetylglucosamine 2-epimerase family.

The protein localises to the cytoplasm. The catalysed reaction is UDP-N-acetyl-alpha-D-glucosamine = UDP-N-acetyl-alpha-D-mannosamine. It participates in glycan metabolism; exopolysaccharide EPS I biosynthesis. Functionally, may be involved in synthesis of N-acetyltrideoxygalactose, a component of exopolysaccharide EPS I which functions as a virulence factor. The polypeptide is Probable UDP-N-acetylglucosamine 2-epimerase (epsC) (Ralstonia solanacearum (Pseudomonas solanacearum)).